A 366-amino-acid chain; its full sequence is Purple acid phosphatase 3 (366 aa).

The first 32 residues, 1 to 32, serve as a signal peptide directing secretion; the sequence is MTYIYRDTKITTKSTIPFLIFFLFCFSNLSMA. Aspartate 81 serves as a coordination point for Fe cation. An N-linked (GlcNAc...) asparagine glycan is attached at asparagine 89. Fe cation-binding residues include aspartate 114 and tyrosine 117. Aspartate 114 lines the Zn(2+) pocket. Zn(2+) contacts are provided by asparagine 152 and histidine 246. Histidine 255 serves as the catalytic Proton donor. Histidine 281 lines the Zn(2+) pocket. Position 281–283 (281–283) interacts with substrate; that stretch reads HDH. Histidine 283 lines the Fe cation pocket.

It belongs to the metallophosphoesterase superfamily. Purple acid phosphatase family. Homodimer. Fe cation is required as a cofactor. Requires Zn(2+) as cofactor. In terms of tissue distribution, expressed in stems, leaves, flowers and siliques.

It localises to the secreted. The catalysed reaction is a phosphate monoester + H2O = an alcohol + phosphate. The chain is Purple acid phosphatase 3 (PAP3) from Arabidopsis thaliana (Mouse-ear cress).